Reading from the N-terminus, the 143-residue chain is Large ribosomal subunit protein uL15 (143 aa).

Positions 1–54 (MQLNSIKPAPGAKHPKRRVGRGIGSGLGKTAGRGHKGQKSRAGGFHKVGFEGGQ) are disordered. Residues 21 to 31 (RGIGSGLGKTA) are compositionally biased toward gly residues.

It belongs to the universal ribosomal protein uL15 family. Part of the 50S ribosomal subunit.

In terms of biological role, binds to the 23S rRNA. The sequence is that of Large ribosomal subunit protein uL15 from Nitrosospira multiformis (strain ATCC 25196 / NCIMB 11849 / C 71).